The primary structure comprises 600 residues: Elongation factor 4 (600 aa).

The tr-type G domain maps to 5-187 (KYIRNFSIIA…AIVNKLPPPK (183 aa)). Residues 17-22 (DHGKST) and 134-137 (NKLD) contribute to the GTP site.

This sequence belongs to the TRAFAC class translation factor GTPase superfamily. Classic translation factor GTPase family. LepA subfamily.

The protein localises to the cell inner membrane. It catalyses the reaction GTP + H2O = GDP + phosphate + H(+). Functionally, required for accurate and efficient protein synthesis under certain stress conditions. May act as a fidelity factor of the translation reaction, by catalyzing a one-codon backward translocation of tRNAs on improperly translocated ribosomes. Back-translocation proceeds from a post-translocation (POST) complex to a pre-translocation (PRE) complex, thus giving elongation factor G a second chance to translocate the tRNAs correctly. Binds to ribosomes in a GTP-dependent manner. The protein is Elongation factor 4 of Rickettsia africae (strain ESF-5).